The primary structure comprises 145 residues: MKFNPFVTSDRSKNRKRHFNAPSHVRRKIMSSPLSKELRQKYNVRSMPIRKDDEVQVVRGHYKGQQIGKVVQVYRKKYVIYIERVQREKANGTTVHVGIHPSKVVITRLKLDKDRKKILERKAKSRQVGKEKGKYKEELIEKMQE.

Disordered stretches follow at residues 1–21 (MKFNPFVTSDRSKNRKRHFNA) and 122–145 (KAKSRQVGKEKGKYKEELIEKMQE). Residues lysine 136 and lysine 142 each participate in a glycyl lysine isopeptide (Lys-Gly) (interchain with G-Cter in SUMO2) cross-link.

The protein belongs to the universal ribosomal protein uL24 family.

This Homo sapiens (Human) protein is Ribosomal protein uL24-like (RPL26L1).